A 621-amino-acid polypeptide reads, in one-letter code: Chaperone protein HtpG (621 aa).

Residues 1–328 (MKQEKKKFDA…SEDLPLNISR (328 aa)) form an a; substrate-binding region. The tract at residues 329–544 (ESLQHNNVLE…EAAMDIRMER (216 aa)) is b. A disordered region spans residues 478–498 (DVDQATSSSEEKNKDDKKSDD). Basic and acidic residues predominate over residues 486 to 498 (SEEKNKDDKKSDD). The c stretch occupies residues 545-621 (FLIEQKQIAN…LNDIVQKAIL (77 aa)).

This sequence belongs to the heat shock protein 90 family. As to quaternary structure, homodimer.

It localises to the cytoplasm. Its function is as follows. Molecular chaperone. Has ATPase activity. In Rickettsia bellii (strain RML369-C), this protein is Chaperone protein HtpG.